An 865-amino-acid chain; its full sequence is Protein translocase subunit SecA (865 aa).

ATP-binding positions include Gln-85, 103-107, and Asp-505; that span reads GEGKT. Residues Cys-847, Cys-849, Cys-858, and His-859 each coordinate Zn(2+).

The protein belongs to the SecA family. As to quaternary structure, monomer and homodimer. Part of the essential Sec protein translocation apparatus which comprises SecA, SecYEG and auxiliary proteins SecDF. Other proteins may also be involved. Zn(2+) is required as a cofactor.

The protein resides in the cell membrane. The protein localises to the cytoplasm. It catalyses the reaction ATP + H2O + cellular proteinSide 1 = ADP + phosphate + cellular proteinSide 2.. Functionally, part of the Sec protein translocase complex. Interacts with the SecYEG preprotein conducting channel. Has a central role in coupling the hydrolysis of ATP to the transfer of proteins into and across the cell membrane, serving as an ATP-driven molecular motor driving the stepwise translocation of polypeptide chains across the membrane. The polypeptide is Protein translocase subunit SecA (Lactococcus lactis subsp. lactis (strain IL1403) (Streptococcus lactis)).